Consider the following 545-residue polypeptide: MLLLHRAVVLRLQQACRLKSIPSRICIQACSTNDSFQPQRPSLTFSGDNSSTQGWRVMGTLLGLGAVLAYQDHRCRAAQESTHIYTKEEVSSHTSPETGIWVTLGSEVFDVTEFVDLHPGGPSKLMLAAGGPLEPFWALYAVHNQSHVRELLAQYKIGELNPEDKVAPTVETSDPYADDPVRHPALKVNSQRPFNAEPPPELLTENYITPNPIFFTRNHLPVPNLDPDTYRLHVVGAPGGQSLSLSLDDLHNFPRYEITVTLQCAGNRRSEMTQVKEVKGLEWRTGAISTARWAGARLCDVLAQAGHQLCETEAHVCFEGLDSDPTGTAYGASIPLARAMDPEAEVLLAYEMNGQPLPRDHGFPVRVVVPGVVGARHVKWLGRVSVQPEESYSHWQRRDYKGFSPSVDWETVDFDSAPSIQELPVQSAITEPRDGETVESGEVTIKGYAWSGGGRAVIRVDVSLDGGLTWQVAKLDGEEQRPRKAWAWRLWQLKAPVPAGQKELNIVCKAVDDGYNVQPDTVAPIWNLRGVLSNAWHRVHVYVSP.

Residues 1–79 (MLLLHRAVVL…YQDHRCRAAQ (79 aa)) constitute a mitochondrion transit peptide. One can recognise a Cytochrome b5 heme-binding domain in the interval 82–161 (THIYTKEEVS…LAQYKIGELN (80 aa)). His-118 lines the heme b pocket. Ser-123 bears the Phosphoserine mark. Residues His-143, Gln-145, and His-147 each coordinate heme b. The interval 165–174 (KVAPTVETSD) is hinge. The segment at 175–401 (PYADDPVRHP…YSHWQRRDYK (227 aa)) is moco domain. Residues 215-219 (FTRNH), Cys-264, Asp-322, His-361, Arg-366, and 377-379 (HVK) each bind Mo-molybdopterin. A homodimerization region spans residues 402–538 (GFSPSVDWET…RGVLSNAWHR (137 aa)).

In terms of assembly, homodimer. The cofactor is heme b. Mo-molybdopterin is required as a cofactor.

It localises to the mitochondrion intermembrane space. It catalyses the reaction sulfite + O2 + H2O = sulfate + H2O2. It functions in the pathway energy metabolism; sulfur metabolism. Functionally, catalyzes the oxidation of sulfite to sulfate, the terminal reaction in the oxidative degradation of sulfur-containing amino acids. This is Sulfite oxidase, mitochondrial (SUOX) from Homo sapiens (Human).